We begin with the raw amino-acid sequence, 76 residues long: Liver-expressed antimicrobial peptide 2 (76 aa).

A signal peptide spans 1-22 (MLQLKLFAVLLTCLLLLGQVNS). Positions 23–36 (SPVPEVSSAKRSRR) are excised as a propeptide. 2 disulfide bridges follow: Cys-53-Cys-64 and Cys-59-Cys-69.

Belongs to the LEAP2 family.

It localises to the secreted. Has an antimicrobial activity. This is Liver-expressed antimicrobial peptide 2 (Leap2) from Mus musculus (Mouse).